We begin with the raw amino-acid sequence, 270 residues long: Putative pyruvate, phosphate dikinase regulatory protein (270 aa).

Residue 148 to 155 (GISRTSKT) coordinates ADP.

This sequence belongs to the pyruvate, phosphate/water dikinase regulatory protein family. PDRP subfamily.

It catalyses the reaction N(tele)-phospho-L-histidyl/L-threonyl-[pyruvate, phosphate dikinase] + ADP = N(tele)-phospho-L-histidyl/O-phospho-L-threonyl-[pyruvate, phosphate dikinase] + AMP + H(+). The catalysed reaction is N(tele)-phospho-L-histidyl/O-phospho-L-threonyl-[pyruvate, phosphate dikinase] + phosphate + H(+) = N(tele)-phospho-L-histidyl/L-threonyl-[pyruvate, phosphate dikinase] + diphosphate. Functionally, bifunctional serine/threonine kinase and phosphorylase involved in the regulation of the pyruvate, phosphate dikinase (PPDK) by catalyzing its phosphorylation/dephosphorylation. The protein is Putative pyruvate, phosphate dikinase regulatory protein of Bacillus cereus (strain 03BB102).